The sequence spans 1228 residues: Minor fimbrium subunit Mfa5 (1228 aa).

Positions 1-25 (MMKRYTIILAVFLLFCTVFTFQIKA) are cleaved as a signal peptide. The 124-residue stretch at 144–267 (DVVMVIDQSS…QYPVKNVTTA (124 aa)) folds into the VWFA domain.

As to quaternary structure, minor fimbriae are composed of a structural subunit, most often Mfa1, and the accessory subunits Mfa3, Mfa4 and Mfa5. Fimbrium assembly occurs by linear, head-to-tail oligomerization of fimbrial subunits. This is mediated via insertion of a C-terminal beta-strand from one subunit into a groove in the N-terminal domain of the following subunit.

The protein resides in the fimbrium. In terms of biological role, accessory subunit of the minor fimbriae. These filamentous pili are attached to the cell surface; they mediate biofilm formation, adhesion onto host cells and onto other bacteria that are part of the oral microbiome. They play an important role in invasion of periodontal tissues and are recognized as major virulence factors. Fimbrium subunits from different strains have highly divergent sequences, and this correlates with pathogenicity. This is Minor fimbrium subunit Mfa5 from Porphyromonas gingivalis (strain ATCC 33277 / DSM 20709 / CIP 103683 / JCM 12257 / NCTC 11834 / 2561).